Consider the following 640-residue polypeptide: 1,4-alpha-glucan branching enzyme GlgB (640 aa).

Asp318 functions as the Nucleophile in the catalytic mechanism. Glu371 serves as the catalytic Proton donor.

It belongs to the glycosyl hydrolase 13 family. GlgB subfamily. Monomer.

The catalysed reaction is Transfers a segment of a (1-&gt;4)-alpha-D-glucan chain to a primary hydroxy group in a similar glucan chain.. It functions in the pathway glycan biosynthesis; glycogen biosynthesis. In terms of biological role, catalyzes the formation of the alpha-1,6-glucosidic linkages in glycogen by scission of a 1,4-alpha-linked oligosaccharide from growing alpha-1,4-glucan chains and the subsequent attachment of the oligosaccharide to the alpha-1,6 position. This is 1,4-alpha-glucan branching enzyme GlgB from Francisella philomiragia subsp. philomiragia (strain ATCC 25017 / CCUG 19701 / FSC 153 / O#319-036).